Consider the following 372-residue polypeptide: Fatty acid 2-hydroxylase (372 aa).

The Cytochrome b5 heme-binding domain occupies Ala-8–Arg-86. Positions 43 and 69 each coordinate heme. The next 2 membrane-spanning stretches (helical) occupy residues Val-168–Tyr-188 and Ser-213–Ile-233. In terms of domain architecture, Fatty acid hydroxylase spans Phe-219–Thr-361. Zn(2+) contacts are provided by His-234, His-239, His-257, His-260, and His-261. 2 helical membrane-spanning segments follow: residues Val-271 to Ile-291 and Leu-292 to Asp-312. Residues His-315, His-319, His-336, His-339, and His-340 each contribute to the Zn(2+) site.

It belongs to the sterol desaturase family. SCS7 subfamily. Zn(2+) is required as a cofactor.

The protein localises to the endoplasmic reticulum membrane. It is found in the microsome membrane. The enzyme catalyses a 1,2-saturated fatty acid + 2 Fe(II)-[cytochrome b5] + O2 + 2 H(+) = a (R)-2-hydroxy fatty acid + 2 Fe(III)-[cytochrome b5] + H2O. It carries out the reaction hexadecanoate + 2 Fe(II)-[cytochrome b5] + O2 + 2 H(+) = (R)-2-hydroxyhexadecanoate + 2 Fe(III)-[cytochrome b5] + H2O. It catalyses the reaction octadecanoate + 2 Fe(II)-[cytochrome b5] + O2 + 2 H(+) = (R)-2-hydroxyoctadecanoate + 2 Fe(III)-[cytochrome b5] + H2O. The catalysed reaction is docosanoate + 2 Fe(II)-[cytochrome b5] + O2 + 2 H(+) = 2-hydroxydocosanoate + 2 Fe(III)-[cytochrome b5] + H2O. The enzyme catalyses tetracosanoate + 2 Fe(II)-[cytochrome b5] + O2 + 2 H(+) = (R)-2-hydroxytetracosanoate + 2 Fe(III)-[cytochrome b5] + H2O. It participates in lipid metabolism; fatty acid metabolism. It functions in the pathway sphingolipid metabolism; galactosylceramide biosynthesis. Functionally, catalyzes the hydroxylation of free fatty acids at the C-2 position to produce 2-hydroxy fatty acids, which are building blocks of sphingolipids and glycosphingolipids common in neural tissue and epidermis. FA2H is stereospecific for the production of (R)-2-hydroxy fatty acids. Plays an essential role in the synthesis of galactosphingolipids of the myelin sheath. Responsible for the synthesis of sphingolipids and glycosphingolipids involved in the formation of epidermal lamellar bodies critical for skin permeability barrier. Participates in the synthesis of glycosphingolipids and a fraction of type II wax diesters in sebaceous gland, specifically regulating hair follicle homeostasis. Involved in the synthesis of sphingolipids of plasma membrane rafts, controlling lipid raft mobility and trafficking of raft-associated proteins. This Macaca fascicularis (Crab-eating macaque) protein is Fatty acid 2-hydroxylase (FA2H).